The primary structure comprises 514 residues: 2-isopropylmalate synthase (514 aa).

In terms of domain architecture, Pyruvate carboxyltransferase spans 5-268 (LIIFDTTLRD…DVGIDTTQIV (264 aa)). Mn(2+)-binding residues include D14, H202, H204, and N239. The segment at 395-514 (KFVSLSQHSE…KDDKLNPQRA (120 aa)) is regulatory domain.

This sequence belongs to the alpha-IPM synthase/homocitrate synthase family. LeuA type 1 subfamily. Homodimer. It depends on Mn(2+) as a cofactor.

The protein resides in the cytoplasm. The enzyme catalyses 3-methyl-2-oxobutanoate + acetyl-CoA + H2O = (2S)-2-isopropylmalate + CoA + H(+). It participates in amino-acid biosynthesis; L-leucine biosynthesis; L-leucine from 3-methyl-2-oxobutanoate: step 1/4. In terms of biological role, catalyzes the condensation of the acetyl group of acetyl-CoA with 3-methyl-2-oxobutanoate (2-ketoisovalerate) to form 3-carboxy-3-hydroxy-4-methylpentanoate (2-isopropylmalate). In Burkholderia vietnamiensis (strain G4 / LMG 22486) (Burkholderia cepacia (strain R1808)), this protein is 2-isopropylmalate synthase.